A 289-amino-acid chain; its full sequence is ATP synthase gamma chain (289 aa).

Belongs to the ATPase gamma chain family. In terms of assembly, F-type ATPases have 2 components, CF(1) - the catalytic core - and CF(0) - the membrane proton channel. CF(1) has five subunits: alpha(3), beta(3), gamma(1), delta(1), epsilon(1). CF(0) has three main subunits: a, b and c.

It localises to the cell inner membrane. In terms of biological role, produces ATP from ADP in the presence of a proton gradient across the membrane. The gamma chain is believed to be important in regulating ATPase activity and the flow of protons through the CF(0) complex. The polypeptide is ATP synthase gamma chain (Actinobacillus succinogenes (strain ATCC 55618 / DSM 22257 / CCUG 43843 / 130Z)).